A 1043-amino-acid chain; its full sequence is Peroxisomal ATPase PEX1 (1043 aa).

Residues 453 to 626 are AAA-cassette D1; it reads ATPAIILDGK…SKNQIMKLNR (174 aa). ATP is bound by residues 461–468 and 738–745; these read GKQGIGKT and GYPGCGKT. The segment at 733–926 is AAA-cassette D2; it reads GILLYGYPGC…CYNAYLKSVH (194 aa).

This sequence belongs to the AAA ATPase family. In terms of assembly, interacts with PEX6; forming the PEX1-PEX6 AAA ATPase complex, which is composed of a heterohexamer formed by a trimer of PEX1-PEX6 dimers. The PEX1-PEX6 heterooligomers associate with the peroxisomal importomer via interaction of PEX6 with the peroxisomal membrane anchor PEX15.

The protein resides in the cytoplasm. It localises to the cytosol. It is found in the peroxisome membrane. The catalysed reaction is ATP + H2O = ADP + phosphate + H(+). Its function is as follows. Component of the PEX1-PEX6 AAA ATPase complex, a protein dislocase complex that mediates the ATP-dependent extraction of the PEX5 receptor from peroxisomal membranes, an essential step for PEX5 recycling. Specifically recognizes PEX5 monoubiquitinated at 'Cys-6', and pulls it out of the peroxisome lumen through the PEX2-PEX10-PEX12 retrotranslocation channel. Extraction by the PEX1-PEX6 AAA ATPase complex is accompanied by unfolding of the TPR repeats and release of bound cargo from PEX5. In Saccharomyces cerevisiae (strain ATCC 204508 / S288c) (Baker's yeast), this protein is Peroxisomal ATPase PEX1.